The chain runs to 585 residues: ATP-dependent lipid A-core flippase (585 aa).

Transmembrane regions (helical) follow at residues 16 to 36, 66 to 86, 156 to 176, 252 to 272, and 278 to 298; these read LWPYISFYKAGLSVAVVALII, FLSMMPYYLVGLMILRGASGF, IIGLMALMFWNSWQLSAILLV, AIANPVIQVIASFALVVVLVL, and LRAELTPGTFAVVFGAMFGLM. An ABC transmembrane type-1 domain is found at 29 to 313; it reads VAVVALIINA…LTNVTSQFQR (285 aa). Residues 345–581 form the ABC transporter domain; it reads IQVKNVTFTY…DGAYAQLHRI (237 aa). 379–386 contacts ATP; sequence GRSGSGKS.

This sequence belongs to the ABC transporter superfamily. Lipid exporter (TC 3.A.1.106) family. In terms of assembly, homodimer.

It is found in the cell inner membrane. The enzyme catalyses ATP + H2O + lipid A-core oligosaccharideSide 1 = ADP + phosphate + lipid A-core oligosaccharideSide 2.. Involved in lipopolysaccharide (LPS) biosynthesis. Translocates lipid A-core from the inner to the outer leaflet of the inner membrane. Transmembrane domains (TMD) form a pore in the inner membrane and the ATP-binding domain (NBD) is responsible for energy generation. The polypeptide is ATP-dependent lipid A-core flippase (Photobacterium profundum (strain SS9)).